We begin with the raw amino-acid sequence, 406 residues long: Argininosuccinate synthase (406 aa).

ATP-binding positions include 11–19 (AYSGGLDTS) and A38. The L-citrulline site is built by Y91 and S96. G121 contributes to the ATP binding site. Residues T123, N127, and D128 each coordinate L-aspartate. Position 127 (N127) interacts with L-citrulline. Residues R131, S181, S190, E266, and Y278 each contribute to the L-citrulline site.

Belongs to the argininosuccinate synthase family. Type 1 subfamily. As to quaternary structure, homotetramer.

It is found in the cytoplasm. It catalyses the reaction L-citrulline + L-aspartate + ATP = 2-(N(omega)-L-arginino)succinate + AMP + diphosphate + H(+). It functions in the pathway amino-acid biosynthesis; L-arginine biosynthesis; L-arginine from L-ornithine and carbamoyl phosphate: step 2/3. In Campylobacter jejuni subsp. jejuni serotype O:6 (strain 81116 / NCTC 11828), this protein is Argininosuccinate synthase.